Here is a 2150-residue protein sequence, read N- to C-terminus: Genome polyprotein (2150 aa).

Gly-2 is lipidated: N-myristoyl glycine; by host. At 2–1463 the chain is on the cytoplasmic side; it reads GAQVSRQNVG…ELNLANTIIT (1462 aa). Residues 565–581 are amphipathic alpha-helix; the sequence is IAQNPVENYIDEVLNEV. Residues 592–611 are disordered; the sequence is PTTSNSAPALDAAETGHTSS. Residues His-868 and Asp-885 each act as for protease 2A activity in the active site. Cys-902 and Cys-904 together coordinate Zn(2+). Residue Cys-956 is the For protease 2A activity of the active site. Residues Cys-962 and His-964 each contribute to the Zn(2+) site. The membrane-binding stretch occupies residues 1088-1157; the sequence is SDSWLKKFTE…SLRVADMKTQ (70 aa). Residues 1088 to 1221 are oligomerization; that stretch reads SDSWLKKFTE…PPGAGKSITT (134 aa). The segment at 1109 to 1113 is RNA-binding; that stretch reads GNKIS. Residues 1181–1343 form the SF3 helicase domain; it reads EAKRIKTLYI…FKDPQGKLNV (163 aa). Zn(2+) contacts are provided by Cys-1350, Cys-1361, and Cys-1366. The segment at 1350–1366 adopts a C4-type; degenerate zinc-finger fold; sequence CDVDNRIGNARCCPFVC. The interval 1393–1400 is RNA-binding; it reads EDRRRRQV. The interval 1404 to 1409 is oligomerization; it reads MTAIFQ. An intramembrane segment occupies 1464-1479; the sequence is IIANVIGMARIIYVIY. The Cytoplasmic segment spans residues 1480–2150; the sequence is KLFCTLQGPY…LLLHEWYEKF (671 aa). Tyr-1489 carries the O-(5'-phospho-RNA)-tyrosine modification. One can recognise a Peptidase C3 domain in the interval 1508–1686; that stretch reads GPEEEFGMSL…FSAMLLRSYF (179 aa). Catalysis depends on for protease 3C activity residues His-1547, Glu-1578, and Cys-1654. The RdRp catalytic domain maps to 1918–2031; it reads KCIMAFDYTN…SYIHELDMEA (114 aa). The Mg(2+) site is built by Asp-1924 and Asp-2017.

This sequence belongs to the picornaviruses polyprotein family. As to quaternary structure, interacts with capsid protein VP1 and capsid protein VP3 to form heterotrimeric protomers. Interacts with capsid protein VP0, and capsid protein VP3 to form heterotrimeric protomers. Five protomers subsequently associate to form pentamers which serve as building blocks for the capsid. Interacts with capsid protein VP2, capsid protein VP3 and capsid protein VP4 following cleavage of capsid protein VP0. In terms of assembly, interacts with capsid protein VP1 and capsid protein VP3 in the mature capsid. As to quaternary structure, interacts with capsid protein VP0 and capsid protein VP1 to form heterotrimeric protomers. Five protomers subsequently associate to form pentamers which serve as building blocks for the capsid. Interacts with capsid protein VP4 in the mature capsid. Interacts with protein 2C; this interaction may be important for virion morphogenesis. Interacts with capsid protein VP1 and capsid protein VP3. In terms of assembly, homodimer. As to quaternary structure, homohexamer; forms a hexameric ring structure with 6-fold symmetry characteristic of AAA+ ATPases. Interacts (via N-terminus) with host RTN3 (via reticulon domain); this interaction is important for viral replication. Interacts with capsid protein VP3; this interaction may be important for virion morphogenesis. Interacts with protein 3CD. In terms of assembly, homodimer. Interacts with host GBF1. Interacts (via GOLD domain) with host ACBD3 (via GOLD domain); this interaction allows the formation of a viral protein 3A/ACBD3 heterotetramer with a 2:2 stoichiometry, which will stimulate the recruitment of host PI4KB in order to synthesize PI4P at the viral RNA replication sites. As to quaternary structure, interacts with RNA-directed RNA polymerase. Interacts with protein 3AB and with RNA-directed RNA polymerase. In terms of assembly, interacts with Viral protein genome-linked and with protein 3CD. It depends on Mg(2+) as a cofactor. Specific enzymatic cleavages in vivo by the viral proteases yield processing intermediates and the mature proteins. Post-translationally, myristoylation is required for the formation of pentamers during virus assembly. Further assembly of 12 pentamers and a molecule of genomic RNA generates the provirion. In terms of processing, during virion maturation, immature virions are rendered infectious following cleavage of VP0 into VP4 and VP2. This maturation seems to be an autocatalytic event triggered by the presence of RNA in the capsid and it is followed by a conformational change infectious virion. Myristoylation is required during RNA encapsidation and formation of the mature virus particle. Post-translationally, VPg is uridylylated by the polymerase into VPg-pUpU. This acts as a nucleotide-peptide primer for the genomic RNA replication.

It localises to the virion. It is found in the host cytoplasm. The protein resides in the host cytoplasmic vesicle membrane. The protein localises to the host nucleus. It catalyses the reaction a ribonucleoside 5'-triphosphate + H2O = a ribonucleoside 5'-diphosphate + phosphate + H(+). It carries out the reaction Selective cleavage of Tyr-|-Gly bond in the picornavirus polyprotein.. The enzyme catalyses RNA(n) + a ribonucleoside 5'-triphosphate = RNA(n+1) + diphosphate. The catalysed reaction is Selective cleavage of Gln-|-Gly bond in the poliovirus polyprotein. In other picornavirus reactions Glu may be substituted for Gln, and Ser or Thr for Gly.. Its activity is regulated as follows. Replication or transcription is subject to high level of random mutations by the nucleotide analog ribavirin. Functionally, forms an icosahedral capsid of pseudo T=3 symmetry with capsid proteins VP2 and VP3. The capsid is 300 Angstroms in diameter, composed of 60 copies of each capsid protein and enclosing the viral positive strand RNA genome. Capsid protein VP1 mainly forms the vertices of the capsid. Capsid protein VP1 interacts with host cell receptor to provide virion attachment to target host cells. This attachment induces virion internalization. Tyrosine kinases are probably involved in the entry process. After binding to its receptor, the capsid undergoes conformational changes. Capsid protein VP1 N-terminus (that contains an amphipathic alpha-helix) and capsid protein VP4 are externalized. Together, they shape a pore in the host membrane through which viral genome is translocated to host cell cytoplasm. Its function is as follows. Forms an icosahedral capsid of pseudo T=3 symmetry with capsid proteins VP2 and VP3. The capsid is 300 Angstroms in diameter, composed of 60 copies of each capsid protein and enclosing the viral positive strand RNA genome. In terms of biological role, lies on the inner surface of the capsid shell. After binding to the host receptor, the capsid undergoes conformational changes. Capsid protein VP4 is released, Capsid protein VP1 N-terminus is externalized, and together, they shape a pore in the host membrane through which the viral genome is translocated into the host cell cytoplasm. Component of immature procapsids, which is cleaved into capsid proteins VP4 and VP2 after maturation. Allows the capsid to remain inactive before the maturation step. Functionally, cysteine protease that cleaves viral polyprotein and specific host proteins. It is responsible for the autocatalytic cleavage between the P1 and P2 regions, which is the first cleavage occurring in the polyprotein. Also cleaves the host translation initiation factor EIF4G1, in order to shut down the capped cellular mRNA translation. Inhibits the host nucleus-cytoplasm protein and RNA trafficking by cleaving host members of the nuclear pores. Counteracts stress granule formation probably by antagonizing its assembly or promoting its dissassembly. Its function is as follows. Plays an essential role in the virus replication cycle by acting as a viroporin. Creates a pore in the host endoplasmic reticulum and as a consequence releases Ca2+ in the cytoplasm of infected cell. In turn, high levels of cytoplasmic calcium may trigger membrane trafficking and transport of viral ER-associated proteins to viroplasms, sites of viral genome replication. In terms of biological role, induces and associates with structural rearrangements of intracellular membranes. Displays RNA-binding, nucleotide binding and NTPase activities. May play a role in virion morphogenesis and viral RNA encapsidation by interacting with the capsid protein VP3. Localizes the viral replication complex to the surface of membranous vesicles. Together with protein 3CD binds the Cis-Active RNA Element (CRE) which is involved in RNA synthesis initiation. Acts as a cofactor to stimulate the activity of 3D polymerase, maybe through a nucleid acid chaperone activity. Functionally, localizes the viral replication complex to the surface of membranous vesicles. It inhibits host cell endoplasmic reticulum-to-Golgi apparatus transport and causes the disassembly of the Golgi complex, possibly through GBF1 interaction. This would result in depletion of MHC, trail receptors and IFN receptors at the host cell surface. Plays an essential role in viral RNA replication by recruiting ACBD3 and PI4KB at the viral replication sites, thereby allowing the formation of the rearranged membranous structures where viral replication takes place. Its function is as follows. Acts as a primer for viral RNA replication and remains covalently bound to viral genomic RNA. VPg is uridylylated prior to priming replication into VPg-pUpU. The oriI viral genomic sequence may act as a template for this. The VPg-pUpU is then used as primer on the genomic RNA poly(A) by the RNA-dependent RNA polymerase to replicate the viral genome. During genome replication, the VPg-RNA linkage is removed by the host TDP2, thereby accelerating replication. During the late stage of the replication cycle, host TDP2 is excluded from sites of viral RNA synthesis and encapsidation, allowing for the generation of progeny virions. In terms of biological role, involved in the viral replication complex and viral polypeptide maturation. It exhibits protease activity with a specificity and catalytic efficiency that is different from protease 3C. Protein 3CD lacks polymerase activity. Protein 3CD binds to the 5'UTR of the viral genome. Replicates the viral genomic RNA on the surface of intracellular membranes. May form linear arrays of subunits that propagate along a strong head-to-tail interaction called interface-I. Covalently attaches UMP to a tyrosine of VPg, which is used to prime RNA synthesis. The positive stranded RNA genome is first replicated at virus induced membranous vesicles, creating a dsRNA genomic replication form. This dsRNA is then used as template to synthesize positive stranded RNA genomes. ss(+)RNA genomes are either translated, replicated or encapsidated. Functionally, major viral protease that mediates proteolytic processing of the polyprotein. Cleaves host EIF5B, contributing to host translation shutoff. Also cleaves host PABPC1, contributing to host translation shutoff. Cleaves host NLRP1, triggers host N-glycine-mediated degradation of the autoinhibitory NLRP1 N-terminal fragment. In Homo sapiens (Human), this protein is Genome polyprotein.